A 68-amino-acid polypeptide reads, in one-letter code: DNA-directed RNA polymerase subunit omega (68 aa).

This sequence belongs to the RNA polymerase subunit omega family. The RNAP catalytic core consists of 2 alpha, 1 beta, 1 beta' and 1 omega subunit. When a sigma factor is associated with the core the holoenzyme is formed, which can initiate transcription.

It carries out the reaction RNA(n) + a ribonucleoside 5'-triphosphate = RNA(n+1) + diphosphate. Promotes RNA polymerase assembly. Latches the N- and C-terminal regions of the beta' subunit thereby facilitating its interaction with the beta and alpha subunits. In Listeria monocytogenes serotype 4b (strain CLIP80459), this protein is DNA-directed RNA polymerase subunit omega.